Here is a 605-residue protein sequence, read N- to C-terminus: Elongation factor 4 (605 aa).

The tr-type G domain maps to 9–192; that stretch reads HHIRNFCIIA…AIVKRVPAPS (184 aa). GTP-binding positions include 21-26 and 139-142; these read DHGKST and NKID.

It belongs to the TRAFAC class translation factor GTPase superfamily. Classic translation factor GTPase family. LepA subfamily.

The protein resides in the cell inner membrane. It catalyses the reaction GTP + H2O = GDP + phosphate + H(+). Required for accurate and efficient protein synthesis under certain stress conditions. May act as a fidelity factor of the translation reaction, by catalyzing a one-codon backward translocation of tRNAs on improperly translocated ribosomes. Back-translocation proceeds from a post-translocation (POST) complex to a pre-translocation (PRE) complex, thus giving elongation factor G a second chance to translocate the tRNAs correctly. Binds to ribosomes in a GTP-dependent manner. This is Elongation factor 4 from Chlorobium phaeobacteroides (strain DSM 266 / SMG 266 / 2430).